The chain runs to 410 residues: Aspartic proteinase Asp1 (410 aa).

Residues 1–23 (MTARLALLASLLLLLQLVPPSSA) form the signal peptide. A propeptide spans 24-46 (VVLELHGNVYPIGHFFITMNIGD) (removed in mature form). The Peptidase A1 domain occupies 38–392 (FFITMNIGDP…DSERSLLGWV (355 aa)). Catalysis depends on residues aspartate 56 and aspartate 257.

Belongs to the peptidase A1 family.

The protein is Aspartic proteinase Asp1 (ASP1) of Oryza sativa subsp. japonica (Rice).